The primary structure comprises 1168 residues: Transcription-repair-coupling factor (1168 aa).

Residues 633-794 form the Helicase ATP-binding domain; it reads DMQKSRPMDR…MLGVRDLSVI (162 aa). An ATP-binding site is contributed by 646–653; the sequence is GDVGYGKT. The DEEQ box signature appears at 747 to 750; that stretch reads DEEQ. One can recognise a Helicase C-terminal domain in the interval 808–969; that stretch reads VLEQNMSFIK…GFKIAMRDLN (162 aa).

The protein in the N-terminal section; belongs to the UvrB family. It in the C-terminal section; belongs to the helicase family. RecG subfamily.

It is found in the cytoplasm. Its function is as follows. Couples transcription and DNA repair by recognizing RNA polymerase (RNAP) stalled at DNA lesions. Mediates ATP-dependent release of RNAP and its truncated transcript from the DNA, and recruitment of nucleotide excision repair machinery to the damaged site. The sequence is that of Transcription-repair-coupling factor from Staphylococcus aureus (strain MSSA476).